The sequence spans 176 residues: Transcriptional repressor NrdR (176 aa).

The segment at 3-34 is a zinc-finger region; it reads CPYCGSLETQVKDSRPTDDASAIRRRRVCPDC. Residues 49–139 enclose the ATP-cone domain; sequence LTVLKKSGRR…VYRNFREARD (91 aa). The interval 147–176 is disordered; sequence LDGAAQPEAPSKDDGGTDEPPAKTRAPTRA.

The protein belongs to the NrdR family. It depends on Zn(2+) as a cofactor.

Negatively regulates transcription of bacterial ribonucleotide reductase nrd genes and operons by binding to NrdR-boxes. This is Transcriptional repressor NrdR from Methylocella silvestris (strain DSM 15510 / CIP 108128 / LMG 27833 / NCIMB 13906 / BL2).